Here is a 1141-residue protein sequence, read N- to C-terminus: Envelopment polyprotein (1141 aa).

Positions 1-18 (MGRLYLIVLGVLITATAG) are cleaved as a signal peptide. The Lumenal portion of the chain corresponds to 19–483 (FPRSVHELKI…HSLAVELCVP (465 aa)). Disulfide bonds link C30–C158, C64–C164, C113–C135, C140–C145, C182–C192, C217–C253, C242–C357, C382–C441, C386–C395, and C458–C481. Residue N141 is glycosylated (N-linked (GlcNAc...) asparagine; by host). The N-linked (GlcNAc...) asparagine; by host glycan is linked to N353. An N-linked (GlcNAc...) asparagine; by host glycan is attached at N405. Residues 484–506 (GIHGWATIALVITFCFGWLLIPT) form a helical membrane-spanning segment. The Cytoplasmic segment spans residues 507–633 (TTMVVLKCLR…LGVFRYKSRC (127 aa)). The segment at 522-539 (CSHYSTESKFKVILEKVK) is binding to the ribonucleoprotein. 2 consecutive CCHC-type zinc fingers follow at residues 551–571 (CDIC…KKSC) and 576–597 (CPYC…YAVC). 3 binding to the ribonucleoprotein regions span residues 594-611 (YAVC…KKSL), 598-609 (KLTGRFHEALKK), and 617-631 (QRGC…RYKS). The 24-residue stretch at 617–640 (QRGCYRTLGVFRYKSRCYVGLVWM) folds into the ITAM domain. 2 positions are modified to phosphotyrosine: Y621 and Y634. The YxxL motif lies at 621–624 (YRTL). The helical transmembrane segment at 634 to 654 (YVGLVWMCLLTLELIVWAASA) threads the bilayer. Topologically, residues 655-1110 (DTPLLEPGWS…EWLLGILNGN (456 aa)) are lumenal. 8 disulfide bridges follow: C741–C776, C745–C783, C757–C890, C771–C901, C786–C909, C812–C821, C829–C838, and C869–C873. The segment at 763-783 (YQYETSWSCNPPDCPGVGTGC) is fusion loop. The N-linked (GlcNAc...) asparagine; by host glycan is linked to N933. Intrachain disulfides connect C975–C1005, C998–C1050, C1015–C1020, C1051–C1056, and C1090–C1094. The chain crosses the membrane as a helical span at residues 1111–1131 (WVVVAVLVIILLISIFLFSFF). Residues 1127–1141 (LFSFFCPIRSHKKQL) form a binding to the ribonucleoprotein region. Residues 1132–1141 (CPIRSHKKQL) are Cytoplasmic-facing.

The protein belongs to the hantavirus envelope glycoprotein family. As to quaternary structure, homodimer. Homotetramer; forms heterotetrameric Gn-Gc spikes in the pre-fusion conformation. Interacts (via C-terminus) with the nucleoprotein. Interacts with host TUFM; this interaction contributes to the virus-induced degradation of mitochondria by autophagy, which leads to degradation of host MAVS and inhibition of type I interferon (IFN) responses. Interacts with host MAP1LC3B; this interaction contributes to the virus-induced degradation of mitochondria by autophagy, which leads to degradation of host MAVS and inhibition of type I interferon (IFN) responses. Homodimer. Homotetramer; forms heterotetrameric Gn-Gc spikes in the pre-fusion conformation. Homotrimer; forms homotrimer in the post-fusion conformation at acidic pH. Interacts (via C-terminus) with the nucleoprotein. In terms of processing, envelope polyprotein precursor is quickly cleaved in vivo just after synthesis, presumably by host signal peptidase.

It localises to the virion membrane. Its subcellular location is the host cell surface. The protein resides in the host Golgi apparatus membrane. The protein localises to the host endoplasmic reticulum membrane. It is found in the host mitochondrion. In terms of biological role, forms homotetramers with glycoprotein C at the surface of the virion. Attaches the virion to host cell receptors including integrin ITGAV/ITGB3. This attachment induces virion internalization predominantly through clathrin-dependent endocytosis. Mediates the assembly and budding of infectious virus particles through its interaction with the nucleocapsid protein and the viral genome. May dysregulate normal immune and endothelial cell responses through an ITAM motif. Translocates to mitochondria, binds to host TUFM and recruits MAP1LC3B. These interactions induce mitochondrial autophagy and therefore destruction of host MAVS leading to inhibition of type I interferon (IFN) responses. Concomitant breakdown of glycoprotein N is apparently prevented by the nucleoprotein that may inhibit Gn-stimulated autophagosome-lysosome fusion. Interacts with the viral genomic RNA. Forms homotetramers with glycoprotein N at the surface of the virion. Attaches the virion to host cell receptors including integrin ITGAV/ITGB3. This attachment induces virion internalization predominantly through clathrin-dependent endocytosis. Class II fusion protein that promotes fusion of viral membrane with host endosomal membrane after endocytosis of the virion. The polypeptide is Envelopment polyprotein (GP) (Homo sapiens (Human)).